Here is a 517-residue protein sequence, read N- to C-terminus: MLSSRAEAAMTAADRAIQRFLRTGAAVRYKVMKNWGVIGGIAAALAAGIYVIWGPITERKKRRKGLVPGLVNLGNTCFMNSLLQGLSACPAFIRWLEEFTSQYSRDQKEPPSHQYLSLTLLHLLKALSCQEVTDDEVLDASCLLDVLRMYRWQISSFEEQDAHELFHVITSSLEDERDRQPRVTHLFDVHSLEQQSEITPKQITCRTRGSPHPTSNHWKSQHPFHGRLTSNMVCKHCEHQSPVRFDTFDSLSLSIPAATWGHPLTLDHCLHHFISSESVRDVVCDNCTKIEAKGTLNGEKVEHQRTTFVKQLKLGKLPQCLCIHLQRLSWSSHGTPLKRHEHVQFNEFLMMDIYKYHLLGHKPSQHNPKLNKNPGPTLELQDGPGAPTPVLNQPGAPKTQIFMNGACSPSLLPTLSAPMPFPLPVVPDYSSSTYLFRLMAVVVHHGDMHSGHFVTYRRSPPSARNPLSTSNQWLWVSDDTVRKASLQEVLSSSAYLLFYERVLSRMQHQSQECKSEE.

At 1–35 (MLSSRAEAAMTAADRAIQRFLRTGAAVRYKVMKNW) the chain is on the mitochondrial intermembrane side. The helical transmembrane segment at 36-56 (GVIGGIAAALAAGIYVIWGPI) threads the bilayer. Over 57 to 517 (TERKKRRKGL…HQSQECKSEE (461 aa)) the chain is Cytoplasmic. Positions 68–502 (PGLVNLGNTC…SAYLLFYERV (435 aa)) constitute a USP domain. Cys-77 functions as the Nucleophile in the catalytic mechanism. Glycyl lysine isopeptide (Lys-Gly) (interchain with G-Cter in ubiquitin) cross-links involve residues Lys-235 and Lys-289. The tract at residues 364–395 (SQHNPKLNKNPGPTLELQDGPGAPTPVLNQPG) is disordered. His-452 acts as the Proton acceptor in catalysis.

This sequence belongs to the peptidase C19 family. Ubiquitinated by parkin (PRKN) at Lys-235 and Lys-289, leading to its degradation. As to expression, expressed in skeletal muscle, pancreas, liver and kidney.

It localises to the mitochondrion outer membrane. It catalyses the reaction Thiol-dependent hydrolysis of ester, thioester, amide, peptide and isopeptide bonds formed by the C-terminal Gly of ubiquitin (a 76-residue protein attached to proteins as an intracellular targeting signal).. Inhibited by the diterpenoid derivative 15-oxospiramilactone (S3). Its function is as follows. Deubiquitinating enzyme tethered to the mitochondrial outer membrane that acts as a key inhibitor of mitophagy by counteracting the action of parkin (PRKN): hydrolyzes ubiquitin attached by parkin on target proteins, such as RHOT1/MIRO1 and TOMM20, thereby blocking parkin's ability to drive mitophagy. Preferentially cleaves 'Lys-6'- and 'Lys-11'-linked polyubiquitin chains, 2 types of linkage that participate in mitophagic signaling. Does not cleave efficiently polyubiquitin phosphorylated at 'Ser-65'. Acts as a negative regulator of mitochondrial fusion by mediating deubiquitination of MFN1 and MFN2. In Homo sapiens (Human), this protein is Ubiquitin carboxyl-terminal hydrolase 30.